Reading from the N-terminus, the 581-residue chain is Alpha-amylase 2 (581 aa).

Positions 1 to 24 (MNYRRNICLRIGWMLLFAFIPAYA) are cleaved as a signal peptide. Cysteines 56 and 64 form a disulfide. Trp-109 is a substrate binding site. Asn-147 provides a ligand contact to Ca(2+). A disulfide bridge links Cys-176 with Cys-191. A Ca(2+)-binding site is contributed by Asp-202. Residue Arg-231 coordinates substrate. Ca(2+)-binding residues include Asp-233, His-237, and Glu-257. The active-site Nucleophile is the Asp-233. 236 to 237 (KH) is a binding site for substrate. Glu-257 serves as the catalytic Proton donor. A substrate-binding site is contributed by Gly-261. A disulfide bond links Cys-267 and Cys-311. Asn-291 carries N-linked (GlcNAc...) asparagine glycosylation. Asp-325 serves as a coordination point for substrate. An N-linked (GlcNAc...) asparagine glycan is attached at Asn-332. Arg-372 contacts substrate. The GPI-anchor amidated serine moiety is linked to residue Ser-551. Residues 552-581 (EAKTIRSFTKLKLFILLIAVPFALPMIILI) constitute a propeptide, removed in mature form.

This sequence belongs to the glycosyl hydrolase 13 family. The cofactor is Ca(2+).

Its subcellular location is the cell membrane. It carries out the reaction Endohydrolysis of (1-&gt;4)-alpha-D-glucosidic linkages in polysaccharides containing three or more (1-&gt;4)-alpha-linked D-glucose units.. This is Alpha-amylase 2 (aah2) from Schizosaccharomyces pombe (strain 972 / ATCC 24843) (Fission yeast).